A 447-amino-acid chain; its full sequence is MPEADSSVLQIWGGHPLRGHVKISGAKNSALVIMAGALLCSGDCRIRNVPLLADVERMGEVISALGVRLTRQADIIDINASEIKTSKAPYELVTQLRASFFAIGAILARLGVAQMPLPGGCAIGARPVDLHVRGLQAMGAEVQIEHGICNAYVPGSGGRLKGAKIYLDTPSVGATETLMMAATLADGETILENAAREPEVVDLANFCKAMGANIQGAGTSTITIVGVPKLHSVDYSIIPDRIEAGTFLVAGAITRSEITLSSVVPDHLIPLIAKLRDIGVTIIEESPDCLRILPAEILKATDIDTLPHPGFPTDMQAPFMALLTLAEGDSIINESVFENRLRHASELNRLGADIRVKGNTAFVRGVPILSGAPVIGTDLRASAALVIAGLAAEGKTTIQGLHHLDRGYDQIDVKLQQLGAKILRVREEPANAEVAANNNASPAPIST.

27–28 contacts phosphoenolpyruvate; that stretch reads KN. Residue Arg-97 coordinates UDP-N-acetyl-alpha-D-glucosamine. Cys-121 serves as the catalytic Proton donor. Cys-121 carries the post-translational modification 2-(S-cysteinyl)pyruvic acid O-phosphothioketal. UDP-N-acetyl-alpha-D-glucosamine is bound by residues 126–130, Asp-314, and Val-336; that span reads RPVDL.

This sequence belongs to the EPSP synthase family. MurA subfamily.

It is found in the cytoplasm. The catalysed reaction is phosphoenolpyruvate + UDP-N-acetyl-alpha-D-glucosamine = UDP-N-acetyl-3-O-(1-carboxyvinyl)-alpha-D-glucosamine + phosphate. It functions in the pathway cell wall biogenesis; peptidoglycan biosynthesis. In terms of biological role, cell wall formation. Adds enolpyruvyl to UDP-N-acetylglucosamine. The protein is UDP-N-acetylglucosamine 1-carboxyvinyltransferase of Trichormus variabilis (strain ATCC 29413 / PCC 7937) (Anabaena variabilis).